A 175-amino-acid polypeptide reads, in one-letter code: ATP synthase subunit b, chloroplastic (175 aa).

Residues Val-22–Gly-42 form a helical membrane-spanning segment.

It belongs to the ATPase B chain family. As to quaternary structure, F-type ATPases have 2 components, F(1) - the catalytic core - and F(0) - the membrane proton channel. F(1) has five subunits: alpha(3), beta(3), gamma(1), delta(1), epsilon(1). F(0) has four main subunits: a(1), b(1), b'(1) and c(10-14). The alpha and beta chains form an alternating ring which encloses part of the gamma chain. F(1) is attached to F(0) by a central stalk formed by the gamma and epsilon chains, while a peripheral stalk is formed by the delta, b and b' chains.

It localises to the plastid. The protein localises to the chloroplast thylakoid membrane. F(1)F(0) ATP synthase produces ATP from ADP in the presence of a proton or sodium gradient. F-type ATPases consist of two structural domains, F(1) containing the extramembraneous catalytic core and F(0) containing the membrane proton channel, linked together by a central stalk and a peripheral stalk. During catalysis, ATP synthesis in the catalytic domain of F(1) is coupled via a rotary mechanism of the central stalk subunits to proton translocation. In terms of biological role, component of the F(0) channel, it forms part of the peripheral stalk, linking F(1) to F(0). This is ATP synthase subunit b, chloroplastic from Chlamydomonas reinhardtii (Chlamydomonas smithii).